The following is a 654-amino-acid chain: Macrolide export ATP-binding/permease protein MacB (654 aa).

In terms of domain architecture, ABC transporter spans 6 to 244 (IEISALNRIF…TSASSATDAA (239 aa)). An ATP-binding site is contributed by 42–49 (GTSGSGKS). The next 4 membrane-spanning stretches (helical) occupy residues 279–299 (LLTM…VAIG), 534–554 (IAVI…LVSV), 584–604 (MVCL…GALF), and 617–637 (VTAI…FGFL).

It belongs to the ABC transporter superfamily. Macrolide exporter (TC 3.A.1.122) family. Homodimer. Part of the tripartite efflux system MacAB-TolC, which is composed of an inner membrane transporter, MacB, a periplasmic membrane fusion protein, MacA, and an outer membrane component, TolC. The complex forms a large protein conduit and can translocate molecules across both the inner and outer membranes. Interacts with MacA.

The protein resides in the cell inner membrane. Part of the tripartite efflux system MacAB-TolC. MacB is a non-canonical ABC transporter that contains transmembrane domains (TMD), which form a pore in the inner membrane, and an ATP-binding domain (NBD), which is responsible for energy generation. Confers resistance against macrolides. This Hahella chejuensis (strain KCTC 2396) protein is Macrolide export ATP-binding/permease protein MacB.